Here is a 349-residue protein sequence, read N- to C-terminus: N-formyl peptide receptor 3 (349 aa).

Residues 1–27 are Extracellular-facing; that stretch reads METNFSIPLNETEEVLPEPAGHTVLWI. N-linked (GlcNAc...) asparagine glycans are attached at residues Asn-4 and Asn-10. A helical transmembrane segment spans residues 28 to 50; that stretch reads FSLLVHGVTFIFGVLGNGLVIWV. Residues 51-61 are Cytoplasmic-facing; sequence AGFRMTRTVNT. The chain crosses the membrane as a helical span at residues 62-83; sequence ICYLNLALADFSFSAILPFHMV. Topologically, residues 84 to 100 are extracellular; sequence SVAMREKWPFGTFLCKL. A disulfide bridge connects residues Cys-98 and Cys-176. The helical transmembrane segment at 101 to 121 threads the bilayer; that stretch reads VHVMIDINLFVSVYLITIIAL. The Cytoplasmic segment spans residues 122–140; it reads DRCICVLHPAWAQNHRTMS. A helical membrane pass occupies residues 141-162; that stretch reads LAKRVMTGLWILTIVLTLPNFI. Topologically, residues 163–205 are extracellular; the sequence is FWTTISTTNGDTYCIFNYPFWGDTVVERMNVFITMAKVSLILH. The chain crosses the membrane as a helical span at residues 206–226; the sequence is FIIGFSIPMSIITVCYGIIVA. Over 227–242 the chain is Cytoplasmic; the sequence is KIHKKRMTKSSRPLHI. A helical membrane pass occupies residues 243–266; sequence FTAVVASFFICWFPYELTGILMAV. Over 267 to 286 the chain is Extracellular; the sequence is WLKEILLNGKYKIILVLINP. Residues 287–306 form a helical membrane-spanning segment; that stretch reads TSSLAFFNSCLNPSLYVFMG. Topologically, residues 307-349 are cytoplasmic; the sequence is HNFQERLIRSLPTSLERALTEVPDSAQTSNTHTTSASPPEETE. The interval 327 to 349 is disordered; sequence EVPDSAQTSNTHTTSASPPEETE. Over residues 331-343 the composition is skewed to polar residues; that stretch reads SAQTSNTHTTSAS.

It belongs to the G-protein coupled receptor 1 family.

The protein localises to the cell membrane. In terms of biological role, low affinity receptor for N-formyl-methionyl peptides, which are powerful neutrophils chemotactic factors. Binding of FMLP to the receptor causes activation of neutrophils. This response is mediated via a G-protein that activates a phosphatidylinositol-calcium second messenger system. The polypeptide is N-formyl peptide receptor 3 (FPR3) (Macaca mulatta (Rhesus macaque)).